A 381-amino-acid polypeptide reads, in one-letter code: Glycerate 2-kinase (381 aa).

Belongs to the glycerate kinase type-1 family.

It catalyses the reaction (R)-glycerate + ATP = (2R)-2-phosphoglycerate + ADP + H(+). In terms of biological role, catalyzes the transfer of the phosphate group from adenosine triphosphate (ATP) to (R)-glycerate to form (2R)-2-phosphoglycerate, an enzymatic step in (L)-glucarate/galactarate catabolic pathway. The chain is Glycerate 2-kinase (garK) from Escherichia coli (strain K12).